An 80-amino-acid polypeptide reads, in one-letter code: Consomatin Mrc1 (80 aa).

An N-terminal signal peptide occupies residues 1–22; that stretch reads MQTAYWVMVMMMVWITAPLSEG. Residues 23 to 57 constitute a propeptide that is removed on maturation; sequence GKLNDVIRGLVPDDVTPQLILRSLISRRPSDSVVR. The cysteines at positions 63 and 68 are disulfide-linked. Tryptophan 65 carries the post-translational modification D-tryptophan. A 4-hydroxyproline mark is found at proline 69, proline 70, proline 71, and proline 72. Residues 74–80 constitute a propeptide that is removed on maturation; it reads RRPNGKG.

This sequence belongs to the conotoxin C superfamily. Consomatin family. Expressed by the venom duct.

Its subcellular location is the secreted. Its function is as follows. Moderately activates human somatostatin receptors (SSTR) with a preferential activation of SSTR1 and SSTR4. In vivo, does not cause behavioral changes in mice within a few minutes of intracranial injection, but causes a progressive loss of movement thereafter. Four to five hours after injection, mice recover, even with the highest dose tested. Shows antinociception and antihyperalgesia activities in two mouse models of acute pain, most probably by acting outside the central nervous system. This Conus mercator (Trader cone) protein is Consomatin Mrc1.